A 577-amino-acid chain; its full sequence is Arginine--tRNA ligase (577 aa).

The 'HIGH' region signature appears at 122–132; the sequence is PNVAKEMHVGH.

Belongs to the class-I aminoacyl-tRNA synthetase family. Monomer.

Its subcellular location is the cytoplasm. It catalyses the reaction tRNA(Arg) + L-arginine + ATP = L-arginyl-tRNA(Arg) + AMP + diphosphate. The sequence is that of Arginine--tRNA ligase from Shigella dysenteriae serotype 1 (strain Sd197).